Reading from the N-terminus, the 133-residue chain is ATP synthase epsilon chain (133 aa).

The protein belongs to the ATPase epsilon chain family. F-type ATPases have 2 components, CF(1) - the catalytic core - and CF(0) - the membrane proton channel. CF(1) has five subunits: alpha(3), beta(3), gamma(1), delta(1), epsilon(1). CF(0) has three main subunits: a, b and c.

The protein resides in the cell membrane. Its function is as follows. Produces ATP from ADP in the presence of a proton gradient across the membrane. This is ATP synthase epsilon chain from Bacillus cereus (strain ATCC 14579 / DSM 31 / CCUG 7414 / JCM 2152 / NBRC 15305 / NCIMB 9373 / NCTC 2599 / NRRL B-3711).